Consider the following 837-residue polypeptide: Neural cell adhesion molecule 2 (837 aa).

Positions 1–19 are cleaved as a signal peptide; the sequence is MSLLLSFYLLGLLVSSGQA. The Extracellular segment spans residues 20–697; that stretch reads LLQVTISLSK…PNIIKDTLFN (678 aa). 5 Ig-like C2-type domains span residues 21 to 108, 113 to 202, 208 to 297, 302 to 396, and 401 to 491; these read LQVT…ATVV, QKLT…RDII, PPAI…AFLQ, PHII…MYLD, and PKFI…YILA. Disulfide bonds link cysteine 42–cysteine 93 and cysteine 136–cysteine 186. Asparagine 177 and asparagine 219 each carry an N-linked (GlcNAc...) asparagine glycan. Cysteine 232 and cysteine 281 are disulfide-bonded. N-linked (GlcNAc...) asparagine glycosylation is present at asparagine 309. The cysteines at positions 322 and 380 are disulfide-linked. N-linked (GlcNAc...) asparagine glycosylation is found at asparagine 406, asparagine 419, asparagine 445, asparagine 474, and asparagine 562. Cysteine 422 and cysteine 475 are disulfide-bonded. 2 Fibronectin type-III domains span residues 498–591 and 593–688; these read SPYG…TLPV and EPSP…PPKP. A helical transmembrane segment spans residues 698–718; sequence GLGLGAVIGLGVAALLLILVV. The Cytoplasmic portion of the chain corresponds to 719 to 837; that stretch reads TDVSCFFIRQ…IQSKEDDSKA (119 aa). The span at 764–785 shows a compositional bias: basic and acidic residues; it reads GSKEPIVEMRTEDERVTNHEDG. Residues 764 to 818 form a disordered region; sequence GSKEPIVEMRTEDERVTNHEDGSPVNEPNETTPLTEPEKLPLKEEDGKEALNPET. At serine 765 the chain carries Phosphoserine. Phosphothreonine is present on threonine 780. Residue serine 786 is modified to Phosphoserine. A compositionally biased stretch (low complexity) spans 789–798; sequence NEPNETTPLT. A compositionally biased stretch (basic and acidic residues) spans 799 to 814; sequence EPEKLPLKEEDGKEAL.

In terms of tissue distribution, expressed most strongly in adult and fetal brain.

It is found in the cell membrane. Functionally, may play important roles in selective fasciculation and zone-to-zone projection of the primary olfactory axons. This Homo sapiens (Human) protein is Neural cell adhesion molecule 2 (NCAM2).